The chain runs to 419 residues: UDP-N-acetylglucosamine 1-carboxyvinyltransferase (419 aa).

22–23 (KN) contributes to the phosphoenolpyruvate binding site. Arg-91 provides a ligand contact to UDP-N-acetyl-alpha-D-glucosamine. Catalysis depends on Cys-115, which acts as the Proton donor. Cys-115 carries the post-translational modification 2-(S-cysteinyl)pyruvic acid O-phosphothioketal. Residues 120 to 124 (RPVDL), 160 to 163 (KVSV), Asp-305, and Ile-327 contribute to the UDP-N-acetyl-alpha-D-glucosamine site.

Belongs to the EPSP synthase family. MurA subfamily.

The protein localises to the cytoplasm. It catalyses the reaction phosphoenolpyruvate + UDP-N-acetyl-alpha-D-glucosamine = UDP-N-acetyl-3-O-(1-carboxyvinyl)-alpha-D-glucosamine + phosphate. It functions in the pathway cell wall biogenesis; peptidoglycan biosynthesis. With respect to regulation, in vitro inhibited by covalent binding of fosfomycin and the fungal product terreic acid in the presence of substrate UDP-N-acetylglucosamine, with an inactivation rate constant of 130 M(-1)sec(-1) for terreic acid. Functionally, cell wall formation. Adds enolpyruvyl to UDP-N-acetylglucosamine. Target for the antibiotic fosfomycin. The sequence is that of UDP-N-acetylglucosamine 1-carboxyvinyltransferase from Enterobacter cloacae subsp. cloacae (strain ATCC 13047 / DSM 30054 / NBRC 13535 / NCTC 10005 / WDCM 00083 / NCDC 279-56).